A 401-amino-acid chain; its full sequence is S-adenosylmethionine synthase (401 aa).

135-140 (GHGSGD) contributes to the ATP binding site.

This sequence belongs to the AdoMet synthase 2 family. Mg(2+) serves as cofactor.

It carries out the reaction L-methionine + ATP + H2O = S-adenosyl-L-methionine + phosphate + diphosphate. The protein operates within amino-acid biosynthesis; S-adenosyl-L-methionine biosynthesis; S-adenosyl-L-methionine from L-methionine: step 1/1. In terms of biological role, catalyzes the formation of S-adenosylmethionine from methionine and ATP. This chain is S-adenosylmethionine synthase (mat), found in Methanothermobacter thermautotrophicus (strain ATCC 29096 / DSM 1053 / JCM 10044 / NBRC 100330 / Delta H) (Methanobacterium thermoautotrophicum).